The following is a 320-amino-acid chain: Undecaprenyl-diphosphatase (320 aa).

Helical transmembrane passes span 9-29, 82-102, 130-150, 161-181, 191-211, 236-256, 265-285, and 296-316; these read FVLI…LEVF, GVAF…WYFW, LGIV…KTFI, LGAI…GEKL, LTMQ…IPGV, FLLG…DLLA, LPLI…IAGL, and VFIW…SAGI.

It belongs to the UppP family.

It is found in the cell inner membrane. It catalyses the reaction di-trans,octa-cis-undecaprenyl diphosphate + H2O = di-trans,octa-cis-undecaprenyl phosphate + phosphate + H(+). Its function is as follows. Catalyzes the dephosphorylation of undecaprenyl diphosphate (UPP). Confers resistance to bacitracin. The chain is Undecaprenyl-diphosphatase from Nostoc sp. (strain PCC 7120 / SAG 25.82 / UTEX 2576).